We begin with the raw amino-acid sequence, 94 residues long: MAVLTDEQIDAALPDLDGWERADGALRRSIKFPSFLDGIDAVRRVAEHAESKDHHPDIDIRWRTVTFALVTHSEGGITQNDVDMARDINGIVGS.

This sequence belongs to the pterin-4-alpha-carbinolamine dehydratase family.

It catalyses the reaction (4aS,6R)-4a-hydroxy-L-erythro-5,6,7,8-tetrahydrobiopterin = (6R)-L-erythro-6,7-dihydrobiopterin + H2O. The protein is Putative pterin-4-alpha-carbinolamine dehydratase of Mycobacterium avium (strain 104).